An 841-amino-acid polypeptide reads, in one-letter code: Alpha-glucuronidase A (841 aa).

The N-terminal stretch at 1–20 (MRGSNLFQLTLALLLSLVAA) is a signal peptide. 14 N-linked (GlcNAc...) asparagine glycosylation sites follow: N51, N76, N149, N222, N279, N310, N343, N450, N465, N527, N576, N682, N723, and N732.

This sequence belongs to the glycosyl hydrolase 67 family.

Its subcellular location is the secreted. The enzyme catalyses an alpha-D-glucuronoside + H2O = D-glucuronate + an alcohol. Its function is as follows. Alpha-glucuronidase involved in the hydrolysis of xylan, a major structural heterogeneous polysaccharide found in plant biomass representing the second most abundant polysaccharide in the biosphere, after cellulose. Releases 4-O-methylglucuronic acid from xylan. The chain is Alpha-glucuronidase A (aguA) from Aspergillus tubingensis.